Here is a 520-residue protein sequence, read N- to C-terminus: Nuclear GTP-binding protein NUG1 (520 aa).

Basic residues-rich tracts occupy residues 1 to 13 (MRVRKRQSRRTST) and 21 to 34 (KKASAHRKKEKKMA). The segment at 1–53 (MRVRKRQSRRTSTKLKEGIKKKASAHRKKEKKMAKKDVTWRSRSKKDPGIPSN) is disordered. The segment covering 35-48 (KKDVTWRSRSKKDP) has biased composition (basic and acidic residues). The 179-residue stretch at 165–343 (YDKIFKSVID…ILDSPGICFP (179 aa)) folds into the CP-type G domain. Residues 213-216 (NKVD), 287-294 (GYPNVGKS), and 336-339 (DSPG) each bind GTP. Phosphoserine is present on S337.

Belongs to the TRAFAC class YlqF/YawG GTPase family.

Its subcellular location is the nucleus. In terms of biological role, GTPase required for 60S ribosomal subunit export to the cytoplasm. The protein is Nuclear GTP-binding protein NUG1 (NUG1) of Saccharomyces cerevisiae (strain ATCC 204508 / S288c) (Baker's yeast).